The chain runs to 295 residues: Acetylglutamate kinase (295 aa).

Residues Gly-66–Gly-67, Arg-88, and Asn-193 contribute to the substrate site.

The protein belongs to the acetylglutamate kinase family. ArgB subfamily.

Its subcellular location is the cytoplasm. It carries out the reaction N-acetyl-L-glutamate + ATP = N-acetyl-L-glutamyl 5-phosphate + ADP. It participates in amino-acid biosynthesis; L-arginine biosynthesis; N(2)-acetyl-L-ornithine from L-glutamate: step 2/4. Functionally, catalyzes the ATP-dependent phosphorylation of N-acetyl-L-glutamate. The chain is Acetylglutamate kinase from Sinorhizobium fredii (strain NBRC 101917 / NGR234).